Here is a 428-residue protein sequence, read N- to C-terminus: Arginine biosynthesis bifunctional protein ArgJ, mitochondrial (428 aa).

Substrate contacts are provided by Thr171, Lys197, Thr208, Glu294, Asn423, and Ser428. Thr208 serves as the catalytic Nucleophile.

It belongs to the ArgJ family. Heterodimer of an alpha and a beta chain. Post-translationally, the alpha and beta chains are autoproteolytically processed from a single precursor protein within the mitochondrion.

It localises to the mitochondrion matrix. It carries out the reaction N(2)-acetyl-L-ornithine + L-glutamate = N-acetyl-L-glutamate + L-ornithine. The enzyme catalyses L-glutamate + acetyl-CoA = N-acetyl-L-glutamate + CoA + H(+). Its pathway is amino-acid biosynthesis; L-arginine biosynthesis; L-ornithine and N-acetyl-L-glutamate from L-glutamate and N(2)-acetyl-L-ornithine (cyclic): step 1/1. It functions in the pathway amino-acid biosynthesis; L-arginine biosynthesis; N(2)-acetyl-L-ornithine from L-glutamate: step 1/4. In terms of biological role, catalyzes two activities which are involved in the cyclic version of arginine biosynthesis: the synthesis of acetylglutamate from glutamate and acetyl-CoA, and of ornithine by transacetylation between acetylornithine and glutamate. In Komagataella phaffii (strain GS115 / ATCC 20864) (Yeast), this protein is Arginine biosynthesis bifunctional protein ArgJ, mitochondrial.